Reading from the N-terminus, the 558-residue chain is Dihydroxy-acid dehydratase (558 aa).

Residue Cys54 coordinates [2Fe-2S] cluster. Asp86 contributes to the Mg(2+) binding site. Cys127 contributes to the [2Fe-2S] cluster binding site. Residues Asp128 and Lys129 each contribute to the Mg(2+) site. N6-carboxylysine is present on Lys129. Cys199 contacts [2Fe-2S] cluster. Glu448 provides a ligand contact to Mg(2+). The active-site Proton acceptor is the Ser474.

The protein belongs to the IlvD/Edd family. In terms of assembly, homodimer. [2Fe-2S] cluster serves as cofactor. Mg(2+) is required as a cofactor.

The catalysed reaction is (2R)-2,3-dihydroxy-3-methylbutanoate = 3-methyl-2-oxobutanoate + H2O. It catalyses the reaction (2R,3R)-2,3-dihydroxy-3-methylpentanoate = (S)-3-methyl-2-oxopentanoate + H2O. It participates in amino-acid biosynthesis; L-isoleucine biosynthesis; L-isoleucine from 2-oxobutanoate: step 3/4. The protein operates within amino-acid biosynthesis; L-valine biosynthesis; L-valine from pyruvate: step 3/4. Its function is as follows. Functions in the biosynthesis of branched-chain amino acids. Catalyzes the dehydration of (2R,3R)-2,3-dihydroxy-3-methylpentanoate (2,3-dihydroxy-3-methylvalerate) into 2-oxo-3-methylpentanoate (2-oxo-3-methylvalerate) and of (2R)-2,3-dihydroxy-3-methylbutanoate (2,3-dihydroxyisovalerate) into 2-oxo-3-methylbutanoate (2-oxoisovalerate), the penultimate precursor to L-isoleucine and L-valine, respectively. In Acidothermus cellulolyticus (strain ATCC 43068 / DSM 8971 / 11B), this protein is Dihydroxy-acid dehydratase.